The following is a 64-amino-acid chain: Large ribosomal subunit protein bL32 (64 aa).

This sequence belongs to the bacterial ribosomal protein bL32 family.

The polypeptide is Large ribosomal subunit protein bL32 (Bifidobacterium longum (strain DJO10A)).